The following is a 71-amino-acid chain: uncharacterized protein (71 aa).

This is an uncharacterized protein from Spiroplasma virus 4 (SpV4).